Here is a 118-residue protein sequence, read N- to C-terminus: UPF0102 protein NE0719 (118 aa).

The protein belongs to the UPF0102 family.

This chain is UPF0102 protein NE0719, found in Nitrosomonas europaea (strain ATCC 19718 / CIP 103999 / KCTC 2705 / NBRC 14298).